The sequence spans 416 residues: CapZ-interacting protein (416 aa).

Disordered stretches follow at residues M1–P84 and A98–M416. Residues T8–V20 show a composition bias toward polar residues. Position 17 is a phosphoserine (S17). A Phosphoserine; by MAPK8; in vitro modification is found at S68. Phosphoserine is present on S82. A Phosphoserine; by MAPK8; in vitro modification is found at S83. S105 bears the Phosphoserine mark. S108 is modified (phosphoserine; by MAPK12 and MAPK13). Residues S116, S120, and S123 each carry the phosphoserine modification. Residue T124 is modified to Phosphothreonine. Residues S126, S127, S135, and S143 each carry the phosphoserine modification. The segment covering V159–R176 has biased composition (basic residues). S177 carries the phosphoserine modification. Position 179 is a phosphoserine; by MAPKAPK2 and MAPKAPK3 (S179). S216 carries the post-translational modification Phosphoserine; by MAPK8; in vitro. The region spanning G227–E330 is the RCSD domain. S244 carries the phosphoserine; by MAPKAPK2 or MAPKAPK3; in vitro modification. The span at S244–G273 shows a compositional bias: basic and acidic residues. Phosphoserine is present on residues S267, S268, S284, S298, and S333. Residues A292–P349 are compositionally biased toward basic and acidic residues. T336 bears the Phosphothreonine mark. S351 carries the phosphoserine modification. The span at D360–Q372 shows a compositional bias: basic and acidic residues. Positions S382–Q397 are enriched in polar residues.

Interacts with CAPZA2 and CAPZB. Post-translationally, dephosphorylation results in its dissociation from CAPZA2. As to expression, highly expressed in skeletal muscle and more weakly in cardiac muscle. Also expressed in several lymphoid organs, including spleen, thymus, peripheral blood leukocytes, lymph node and bone marrow.

Stress-induced phosphorylation of CAPZIP may regulate the ability of F-actin-capping protein to remodel actin filament assembly. This is CapZ-interacting protein (RCSD1) from Homo sapiens (Human).